The primary structure comprises 335 residues: Phosphate acyltransferase (335 aa).

It belongs to the PlsX family. In terms of assembly, homodimer. Probably interacts with PlsY.

The protein resides in the cytoplasm. The enzyme catalyses a fatty acyl-[ACP] + phosphate = an acyl phosphate + holo-[ACP]. The protein operates within lipid metabolism; phospholipid metabolism. In terms of biological role, catalyzes the reversible formation of acyl-phosphate (acyl-PO(4)) from acyl-[acyl-carrier-protein] (acyl-ACP). This enzyme utilizes acyl-ACP as fatty acyl donor, but not acyl-CoA. The chain is Phosphate acyltransferase from Streptococcus pyogenes serotype M18 (strain MGAS8232).